Reading from the N-terminus, the 229-residue chain is Zinc finger matrin-type protein 4 (229 aa).

Matrin-type zinc fingers lie at residues 14–44 (SYCK…KVRL), 72–106 (DKNK…LKLL), 145–175 (RYCG…NAAR), and 198–228 (YRCT…NLKN).

It is found in the nucleus. This is Zinc finger matrin-type protein 4 (Zmat4) from Mus musculus (Mouse).